The sequence spans 256 residues: 5-keto-4-deoxy-D-glucarate aldolase (256 aa).

The Proton acceptor role is filled by H50. Residue Q151 coordinates substrate. E153 lines the Mg(2+) pocket. Residues S178 and D179 each coordinate substrate. D179 lines the Mg(2+) pocket.

The protein belongs to the HpcH/HpaI aldolase family. KDGluc aldolase subfamily. As to quaternary structure, homohexamer; trimer of dimers. It depends on Mg(2+) as a cofactor.

It carries out the reaction 5-dehydro-4-deoxy-D-glucarate = 2-hydroxy-3-oxopropanoate + pyruvate. It catalyses the reaction 2-dehydro-3-deoxy-D-glucarate = 2-hydroxy-3-oxopropanoate + pyruvate. It participates in carbohydrate acid metabolism; galactarate degradation; D-glycerate from galactarate: step 2/3. Catalyzes the reversible retro-aldol cleavage of both 5-keto-4-deoxy-D-glucarate and 2-keto-3-deoxy-D-glucarate to pyruvate and tartronic semialdehyde. The sequence is that of 5-keto-4-deoxy-D-glucarate aldolase from Escherichia fergusonii (strain ATCC 35469 / DSM 13698 / CCUG 18766 / IAM 14443 / JCM 21226 / LMG 7866 / NBRC 102419 / NCTC 12128 / CDC 0568-73).